The sequence spans 125 residues: Large ribosomal subunit protein bL12 (125 aa).

Belongs to the bacterial ribosomal protein bL12 family. In terms of assembly, homodimer. Part of the ribosomal stalk of the 50S ribosomal subunit. Forms a multimeric L10(L12)X complex, where L10 forms an elongated spine to which 2 to 4 L12 dimers bind in a sequential fashion. Binds GTP-bound translation factors.

Its function is as follows. Forms part of the ribosomal stalk which helps the ribosome interact with GTP-bound translation factors. Is thus essential for accurate translation. The chain is Large ribosomal subunit protein bL12 from Syntrophomonas wolfei subsp. wolfei (strain DSM 2245B / Goettingen).